The sequence spans 112 residues: MLTTTCRRLSQALQRPHALSAVAQRCLRAPGARSYADQNEKAEQPRTFHPALLQFLVCPLSKKPLRYDASTNELINDELGIAYPIIDGVPNMIPQAARTTRQKEKQEETKQH.

Residues 1–34 constitute a mitochondrion transit peptide; the sequence is MLTTTCRRLSQALQRPHALSAVAQRCLRAPGARS. A TRM112 domain is found at 49–95; the sequence is HPALLQFLVCPLSKKPLRYDASTNELINDELGIAYPIIDGVPNMIPQ.

The protein belongs to the PREY family. As to quaternary structure, interacts (via TRM112 domain) with NDUFAF5; the interaction is direct and stabilizes NDUFAF5 protein. Interacts with COQ5; the interaction is direct, stabilizes COQ5 protein and associates PYURF with COQ enzyme complex.

The protein localises to the mitochondrion. In terms of biological role, in mitochondria, S-adenosylmethionine-dependent methyltransferase chaperone that supports both coenzyme Q biosynthesis, by stabilizing its components, such as COQ5, and NADH:ubiquinone oxidoreductase complex (complex I, MT-ND1) assembly, by stabilizing complex I assembly factors, such as NDUFAF5. This is Protein preY, mitochondrial (Pyurf) from Rattus norvegicus (Rat).